A 436-amino-acid chain; its full sequence is Carboxypeptidase A5 (436 aa).

The first 33 residues, 1–33 (MQGTPAGGTSPGPSPMDRQTLLVFSLILAAALG), serve as a signal peptide directing secretion. Residues 34–126 (QMNFTGDQVL…EREAMAKSRR (93 aa)) constitute a propeptide, activation peptide. The region spanning 138-431 (SYHTLEEISS…MALRTIMEHT (294 aa)) is the Peptidase M14 domain. Zn(2+) is bound by residues His-196 and Glu-199. Residues 196 to 199 (HSRE), Arg-254, and 271 to 272 (NR) each bind substrate. Cys-265 and Cys-288 are disulfide-bonded. Residue His-323 participates in Zn(2+) binding. Substrate is bound by residues 324–325 (SY) and Tyr-375. Glu-397 functions as the Proton donor/acceptor in the catalytic mechanism.

It belongs to the peptidase M14 family. It depends on Zn(2+) as a cofactor.

It is found in the secreted. This Macaca fascicularis (Crab-eating macaque) protein is Carboxypeptidase A5 (CPA5).